Reading from the N-terminus, the 492-residue chain is Probable malate:quinone oxidoreductase (492 aa).

It belongs to the MQO family. FAD serves as cofactor.

It carries out the reaction (S)-malate + a quinone = a quinol + oxaloacetate. The protein operates within carbohydrate metabolism; tricarboxylic acid cycle; oxaloacetate from (S)-malate (quinone route): step 1/1. The polypeptide is Probable malate:quinone oxidoreductase (Methylobacillus flagellatus (strain ATCC 51484 / DSM 6875 / VKM B-1610 / KT)).